Here is a 270-residue protein sequence, read N- to C-terminus: Phosphonoacetaldehyde hydrolase (270 aa).

The active-site Nucleophile is Asp11. Residues Asp11 and Ala13 each coordinate Mg(2+). The active-site Schiff-base intermediate with substrate is Lys53. Asp187 contacts Mg(2+).

It belongs to the HAD-like hydrolase superfamily. PhnX family. Homodimer. Mg(2+) serves as cofactor.

The enzyme catalyses phosphonoacetaldehyde + H2O = acetaldehyde + phosphate + H(+). Involved in phosphonate degradation. The sequence is that of Phosphonoacetaldehyde hydrolase from Salmonella choleraesuis (strain SC-B67).